We begin with the raw amino-acid sequence, 146 residues long: MALLKKINTQVNRIMKNSSLVQNICFDRVPLFIPRLSLTVKYCLAVKLLIYLLYCWYIYSEVPSVSSKFRSFTFGCVVVYHNKFFPRFIRTHSINSIRTFSKFQVIILFSIEKVTRSESKNHSYSKTDISDLHQGYNNPPSRFISR.

Residues 38 to 60 (LTVKYCLAVKLLIYLLYCWYIYS) traverse the membrane as a helical segment.

It belongs to the UPF0742 family.

It is found in the cytoplasm. The protein localises to the nucleus membrane. The polypeptide is UPF0742 protein PB2B2.17c (Schizosaccharomyces pombe (strain 972 / ATCC 24843) (Fission yeast)).